The chain runs to 236 residues: Exosome complex component Rrp4 (236 aa).

The region spanning 64–133 is the S1 motif domain; it reads GDKVIGKVIE…EIKESWLTLK (70 aa). Positions 141–199 constitute a KH domain; the sequence is EGGHMVLIHASRVPRVIGKGGGMVNMVKELTATRIIIGQNGLIWIDGPIEGVTMAIAAI.

The protein belongs to the RRP4 family. Component of the archaeal exosome complex. Forms a trimer of Rrp4 and/or Csl4 subunits. The trimer associates with a hexameric ring-like arrangement composed of 3 Rrp41-Rrp42 heterodimers.

It is found in the cytoplasm. Functionally, non-catalytic component of the exosome, which is a complex involved in RNA degradation. Increases the RNA binding and the efficiency of RNA degradation. Confers strong poly(A) specificity to the exosome. The chain is Exosome complex component Rrp4 from Thermoplasma acidophilum (strain ATCC 25905 / DSM 1728 / JCM 9062 / NBRC 15155 / AMRC-C165).